The following is a 416-amino-acid chain: MTITITNIKRVGSEQTESLTIENGLIKGWNLPAEGEIFDGQGGTLAPALIELHAHLREPGQTEKEDLASGLAAASAGGYGTVVCMPNTRPVIDDPALVRSLIEKARGLGFARLRPAAAVTKGEKGEQLTEMSYLKEAGAVMFTDDGLTNENARVLRLGMEYAKSLGMVISVHAEDDALRAGGVMNEGPVSESLGLPGNPAAAAAARVARDMEIVALTGARLHVQHLSTARELDIVRDAKRRGLPVTCEVCPHHLDLTDESLRTFDAMYKVAPPLRTRADADYLLEGLLDGSVDCIATDHAPHTRAEKERDLLDAPSGIAYIEIAFPIMWTRFGERLGLEKLIDLMTAGPARVMGWPEPSLEAGAPADMVVLDLETEREVNPAEFKSKAKFTPWQGQKLRGFPLLTVVDGKVAYRRE.

Positions 53 and 55 each coordinate Zn(2+). Substrate contacts are provided by residues 55–57 (HLR) and asparagine 87. Aspartate 145, histidine 172, histidine 225, and aspartate 298 together coordinate Zn(2+). The active site involves aspartate 298. Histidine 302 lines the substrate pocket.

Belongs to the metallo-dependent hydrolases superfamily. DHOase family. Class I DHOase subfamily. The cofactor is Zn(2+).

The catalysed reaction is (S)-dihydroorotate + H2O = N-carbamoyl-L-aspartate + H(+). It participates in pyrimidine metabolism; UMP biosynthesis via de novo pathway; (S)-dihydroorotate from bicarbonate: step 3/3. In terms of biological role, catalyzes the reversible cyclization of carbamoyl aspartate to dihydroorotate. This Deinococcus radiodurans (strain ATCC 13939 / DSM 20539 / JCM 16871 / CCUG 27074 / LMG 4051 / NBRC 15346 / NCIMB 9279 / VKM B-1422 / R1) protein is Dihydroorotase.